The sequence spans 335 residues: Mesoderm-specific transcript protein (335 aa).

Helical transmembrane passes span 13–33 (WWVQ…HIPP) and 63–83 (VGVV…TSSY). Residues 71-310 (IVVLLHGFPT…PRSTVSILDD (240 aa)) form the AB hydrolase-1 domain. The RVIALD signature appears at 98-103 (RVIALD). A glycan (N-linked (GlcNAc...) asparagine) is linked at Asn-163. The chain crosses the membrane as a helical span at residues 266–286 (VGALASVSIPIHFIYGPLDPI).

The protein belongs to the AB hydrolase superfamily. As to expression, expressed in mesodermal tissues. Isoform 1 is exclusively expressed from the paternal allele in all fetal tissues and cell lines examined, whereas isoform 2 is preferentially expressed from the paternal allele in a tissue-type-specific manner.

The protein localises to the endoplasmic reticulum membrane. The protein is Mesoderm-specific transcript protein (Mest) of Mus musculus (Mouse).